The primary structure comprises 364 residues: MSANSSRVGQLLLQGSACIRWKQDVEGAVYHLANCLLLLGFMGGSGVYGCFYLFGFLSAGYLCCVLWGWFSACGLDIVLWSFLLAVVCLLQLAHLVYRLREDTLPEEFDLLYKTLCLPLQVPLQTYKEIVHCCEEQVLTLATEQTYAVEGETPINRLSLLLSGRVRVSQDGQFLHYIFPYQFMDSPEWESLQPSEEGVFQVTLTAETSCSYISWPRKSLHLLLTKERYISCLFSALLGYDISEKLYTLNDKLFAKFGLRFDIRLPSLYHVLGPTAADAGPESEKGDEEVCEPAVSPPQATPTSLQQTPPCSTPPATTNFPAPPTRARLSRPDSGILASRIPLQSYSQVISRGQAPLAPTHTPEL.

Asn4 is a glycosylation site (N-linked (GlcNAc...) asparagine). Transmembrane regions (helical) follow at residues 37 to 57 (LLLG…FGFL) and 77 to 97 (IVLW…HLVY). Residues 276–333 (ADAGPESEKGDEEVCEPAVSPPQATPTSLQQTPPCSTPPATTNFPAPPTRARLSRPDS) are disordered. Residues 300–309 (TPTSLQQTPP) are compositionally biased toward polar residues. A Phosphothreonine modification is found at Thr361.

Belongs to the popeye family. As to expression, expressed predominantly in the heart and in the skeletal muscle.

The protein localises to the membrane. It localises to the cell membrane. Its subcellular location is the sarcolemma. Important for the maintenance of cardiac function. Plays a regulatory function in heart rate dynamics mediated, at least in part, through cAMP-binding and, probably, by increasing cell surface expression of the potassium channel KCNK2 and enhancing current density. This chain is Popeye domain-containing protein 2 (POPDC2), found in Homo sapiens (Human).